The chain runs to 122 residues: Large ribosomal subunit protein uL14 (122 aa).

This sequence belongs to the universal ribosomal protein uL14 family. As to quaternary structure, part of the 50S ribosomal subunit. Forms a cluster with proteins L3 and L19. In the 70S ribosome, L14 and L19 interact and together make contacts with the 16S rRNA in bridges B5 and B8.

Its function is as follows. Binds to 23S rRNA. Forms part of two intersubunit bridges in the 70S ribosome. This chain is Large ribosomal subunit protein uL14, found in Nitrosospira multiformis (strain ATCC 25196 / NCIMB 11849 / C 71).